A 131-amino-acid polypeptide reads, in one-letter code: Small ribosomal subunit protein uS8 (131 aa).

The protein belongs to the universal ribosomal protein uS8 family. In terms of assembly, part of the 30S ribosomal subunit. Contacts proteins S5 and S12.

Functionally, one of the primary rRNA binding proteins, it binds directly to 16S rRNA central domain where it helps coordinate assembly of the platform of the 30S subunit. This chain is Small ribosomal subunit protein uS8, found in Finegoldia magna (strain ATCC 29328 / DSM 20472 / WAL 2508) (Peptostreptococcus magnus).